Here is a 369-residue protein sequence, read N- to C-terminus: UPF0283 membrane protein RPA1583 (369 aa).

The interval M1 to R61 is disordered. Over residues A34–A51 the composition is skewed to low complexity. The next 3 membrane-spanning stretches (helical) occupy residues W90–I110, L124–G144, and V239–A259.

The protein belongs to the UPF0283 family.

The protein resides in the cell inner membrane. The protein is UPF0283 membrane protein RPA1583 of Rhodopseudomonas palustris (strain ATCC BAA-98 / CGA009).